Reading from the N-terminus, the 219-residue chain is Octanoyltransferase (219 aa).

The BPL/LPL catalytic domain occupies 32–207; sequence ENSQDEIWIV…TLSQELGLDK (176 aa). Substrate-binding positions include 71–78, 138–140, and 151–153; these read RGGQVTYH, SLG, and GLA. Cys169 serves as the catalytic Acyl-thioester intermediate.

The protein belongs to the LipB family.

It is found in the cytoplasm. The catalysed reaction is octanoyl-[ACP] + L-lysyl-[protein] = N(6)-octanoyl-L-lysyl-[protein] + holo-[ACP] + H(+). It participates in protein modification; protein lipoylation via endogenous pathway; protein N(6)-(lipoyl)lysine from octanoyl-[acyl-carrier-protein]: step 1/2. Its function is as follows. Catalyzes the transfer of endogenously produced octanoic acid from octanoyl-acyl-carrier-protein onto the lipoyl domains of lipoate-dependent enzymes. Lipoyl-ACP can also act as a substrate although octanoyl-ACP is likely to be the physiological substrate. In Shewanella halifaxensis (strain HAW-EB4), this protein is Octanoyltransferase.